Consider the following 429-residue polypeptide: Glutamate-1-semialdehyde 2,1-aminomutase (429 aa).

Position 265 is an N6-(pyridoxal phosphate)lysine (Lys265).

This sequence belongs to the class-III pyridoxal-phosphate-dependent aminotransferase family. HemL subfamily. Homodimer. The cofactor is pyridoxal 5'-phosphate.

The protein resides in the cytoplasm. The catalysed reaction is (S)-4-amino-5-oxopentanoate = 5-aminolevulinate. It participates in porphyrin-containing compound metabolism; protoporphyrin-IX biosynthesis; 5-aminolevulinate from L-glutamyl-tRNA(Glu): step 2/2. The sequence is that of Glutamate-1-semialdehyde 2,1-aminomutase from Shewanella piezotolerans (strain WP3 / JCM 13877).